The sequence spans 145 residues: D-aminoacyl-tRNA deacylase (145 aa).

The Gly-cisPro motif, important for rejection of L-amino acids signature appears at glycine 137–proline 138.

Belongs to the DTD family. Homodimer.

The protein localises to the cytoplasm. It catalyses the reaction glycyl-tRNA(Ala) + H2O = tRNA(Ala) + glycine + H(+). It carries out the reaction a D-aminoacyl-tRNA + H2O = a tRNA + a D-alpha-amino acid + H(+). Its function is as follows. An aminoacyl-tRNA editing enzyme that deacylates mischarged D-aminoacyl-tRNAs. Also deacylates mischarged glycyl-tRNA(Ala), protecting cells against glycine mischarging by AlaRS. Acts via tRNA-based rather than protein-based catalysis; rejects L-amino acids rather than detecting D-amino acids in the active site. By recycling D-aminoacyl-tRNA to D-amino acids and free tRNA molecules, this enzyme counteracts the toxicity associated with the formation of D-aminoacyl-tRNA entities in vivo and helps enforce protein L-homochirality. The protein is D-aminoacyl-tRNA deacylase of Stutzerimonas stutzeri (strain A1501) (Pseudomonas stutzeri).